A 120-amino-acid chain; its full sequence is Ribosome-binding factor A (120 aa).

The protein belongs to the RbfA family. In terms of assembly, monomer. Binds 30S ribosomal subunits, but not 50S ribosomal subunits or 70S ribosomes.

It is found in the cytoplasm. In terms of biological role, one of several proteins that assist in the late maturation steps of the functional core of the 30S ribosomal subunit. Associates with free 30S ribosomal subunits (but not with 30S subunits that are part of 70S ribosomes or polysomes). Required for efficient processing of 16S rRNA. May interact with the 5'-terminal helix region of 16S rRNA. This is Ribosome-binding factor A from Clostridium botulinum (strain ATCC 19397 / Type A).